Here is a 955-residue protein sequence, read N- to C-terminus: 2-oxoglutarate dehydrogenase E1 component (955 aa).

It belongs to the alpha-ketoglutarate dehydrogenase family. As to quaternary structure, homodimer. Part of the 2-oxoglutarate dehydrogenase (OGDH) complex composed of E1 (2-oxoglutarate dehydrogenase), E2 (dihydrolipoamide succinyltransferase) and E3 (dihydrolipoamide dehydrogenase); the complex contains multiple copies of the three enzymatic components (E1, E2 and E3). Requires thiamine diphosphate as cofactor.

It carries out the reaction N(6)-[(R)-lipoyl]-L-lysyl-[protein] + 2-oxoglutarate + H(+) = N(6)-[(R)-S(8)-succinyldihydrolipoyl]-L-lysyl-[protein] + CO2. In terms of biological role, E1 component of the 2-oxoglutarate dehydrogenase (OGDH) complex which catalyzes the decarboxylation of 2-oxoglutarate, the first step in the conversion of 2-oxoglutarate to succinyl-CoA and CO(2). In Bacillus cereus (strain B4264), this protein is 2-oxoglutarate dehydrogenase E1 component.